A 169-amino-acid chain; its full sequence is GTP-dependent dephospho-CoA kinase (169 aa).

GTP contacts are provided by D45, D64, and E121.

Belongs to the GTP-dependent DPCK family.

The enzyme catalyses 3'-dephospho-CoA + GTP = GDP + CoA + H(+). It participates in cofactor biosynthesis; coenzyme A biosynthesis. In terms of biological role, catalyzes the GTP-dependent phosphorylation of the 3'-hydroxyl group of dephosphocoenzyme A to form coenzyme A (CoA). This is GTP-dependent dephospho-CoA kinase from Methanobrevibacter smithii (strain ATCC 35061 / DSM 861 / OCM 144 / PS).